Here is a 176-residue protein sequence, read N- to C-terminus: Ribosome rescue factor SmrB (176 aa).

The Smr domain occupies 93–168 (LDLHGYRQSE…GDAALLVLID (76 aa)).

It belongs to the SmrB family. In terms of assembly, associates with collided ribosomes, but not with correctly translating polysomes.

Functionally, acts as a ribosome collision sensor. Detects stalled/collided disomes (pairs of ribosomes where the leading ribosome is stalled and a second ribosome has collided with it) and endonucleolytically cleaves mRNA at the 5' boundary of the stalled ribosome. Stalled/collided disomes form a new interface (primarily via the 30S subunits) that binds SmrB. Cleaved mRNA becomes available for tmRNA ligation, leading to ribosomal subunit dissociation and rescue of stalled ribosomes. The sequence is that of Ribosome rescue factor SmrB from Shewanella sp. (strain MR-4).